The primary structure comprises 2371 residues: Highly reducing polyketide synthase ntnH (2371 aa).

Residues 10-429 form the Ketosynthase family 3 (KS3) domain; sequence PSPIAIVGIG…GANAHVILEG (420 aa). Catalysis depends on for beta-ketoacyl synthase activity residues cysteine 180, histidine 316, and histidine 352. Residues 528 to 796 are malonyl-CoA:ACP transacylase (MAT) domain; sequence FIFTGQGAQW…NSCLSRGADA (269 aa). The segment at 858 to 986 is N-terminal hotdog fold; that stretch reads HELLGARVIG…GKVHPGNAST (129 aa). Residues 858–1142 form a dehydratase (DH) domain region; it reads HELLGARVIG…GIRFRILENN (285 aa). Residues 858–1145 form the PKS/mFAS DH domain; it reads HELLGARVIG…FRILENNRSK (288 aa). Histidine 890 acts as the Proton acceptor; for dehydratase activity in catalysis. A C-terminal hotdog fold region spans residues 1001–1145; that stretch reads VRGVISAKWY…FRILENNRSK (145 aa). The active-site Proton donor; for dehydratase activity is the aspartate 1059. The methyltransferase (CMet) domain stretch occupies residues 1309–1456; the sequence is FFQLLGHNKK…FENVTAIMDQ (148 aa). Positions 1669–1968 are enoyl reductase (ER) (ER) domain; the sequence is GLLSSLQWQG…GHRPIGAICI (300 aa). The interval 1993-2167 is ketoreductase (KR) domain; sequence SYVLIGGLGG…ASVIDLGVME (175 aa). The Carrier domain maps to 2280 to 2362; the sequence is EDETAVAEFL…DLGKLARSRI (83 aa). Serine 2322 is subject to O-(pantetheine 4'-phosphoryl)serine.

It functions in the pathway secondary metabolite biosynthesis; terpenoid biosynthesis. Functionally, highly reducing polyketide synthase; part of the gene cluster that mediates the biosynthesis of the meroterpenoids nectripenoids A and B, as well as cochliquninone D and isocochliquninone E. The pathway probably begins with the HR-PKS ntnH that catalyzes two chain-extension steps to form a reduced triketide, which then primes the SAT domain in the NR-PKS ntnG to initiate three more cycles of extension to give a linear hexaketide corresponding to the polyketide part of nectripenoids. The FAD-dependent monooxygenase ntnJ then performs an oxidative decarboxylation at C11 of the ntnH/ntnG product, via an electrophilic aromatic hydroxylation with concomitant ipso-decarboxylation. The membrane-bound polyprenyl transferase ntnF then introduces a farnesyl group before the FAD-dependent monooxygenase ntnK functions as the first epoxidase on terminal C12'-C13' olefin, followed by a second epoxidation on C7'-C8' catalyzed by ntnA. The terpene cyclase/mutase ntnI then initiates the sequential tricyclic ring formation through protonation of the terminal epoxide and catalyzes the regioselective and stereoselective 6/6/6-tricyclic ring formation. The cytochrome P450 monooxygenase ntnM may then hydroxylate C1'. The polypeptide is Highly reducing polyketide synthase ntnH (Nectria sp).